A 312-amino-acid polypeptide reads, in one-letter code: Olfactory receptor 6C70 (312 aa).

The Extracellular portion of the chain corresponds to 1–22 (MKNHTRQIEFILLGLTDNSQLQ). Residue N3 is glycosylated (N-linked (GlcNAc...) asparagine). Residues 23 to 43 (IVIFLFLLLNCVLSMIGNFTI) traverse the membrane as a helical segment. At 44–63 (IALILLDSQLKTPMYFFLRN) the chain is on the cytoplasmic side. Residues 64–84 (FSFLEISFTTACIPRFLITIV) form a helical membrane-spanning segment. Topologically, residues 85-95 (TREKTISCNGC) are extracellular. A disulfide bridge connects residues C95 and C177. The helical transmembrane segment at 96 to 116 (ISQLFFYIFLGVTEFFLLAAL) threads the bilayer. The Cytoplasmic segment spans residues 117–141 (SYDRYVAICKPLRYMSIMSNKVCYQ). A helical membrane pass occupies residues 142 to 162 (LVFSSWVTGFLIIFTPLILGL). Over 163–194 (NLDFCASNIIDHFICDISLILQLSCSDTHLLE) the chain is Extracellular. A helical membrane pass occupies residues 195–215 (LIAFLLAVMTLIVTLFLVILS). The Cytoplasmic portion of the chain corresponds to 216–237 (YSYIIKTILKFPSAQQKKKAFS). Residues 238–258 (TCSSHMIVVSITYGSCMFIYI) traverse the membrane as a helical segment. The Extracellular segment spans residues 259-272 (KPSANERVALSKGV). Residues 273–290 (TVLNTSVAPLLNPFIYTL) traverse the membrane as a helical segment. The Cytoplasmic portion of the chain corresponds to 291–312 (RNQQVKQAFKAVFRKIFSASDK).

It belongs to the G-protein coupled receptor 1 family.

The protein localises to the cell membrane. In terms of biological role, odorant receptor. The chain is Olfactory receptor 6C70 (OR6C70) from Homo sapiens (Human).